A 407-amino-acid polypeptide reads, in one-letter code: Imidazolonepropionase (407 aa).

Positions 73 and 75 each coordinate Fe(3+). Zn(2+) is bound by residues His73 and His75. Residues Arg82, Tyr145, and His178 each contribute to the 4-imidazolone-5-propanoate site. Tyr145 contributes to the N-formimidoyl-L-glutamate binding site. Residue His243 participates in Fe(3+) binding. His243 is a binding site for Zn(2+). Gln246 lines the 4-imidazolone-5-propanoate pocket. Position 318 (Asp318) interacts with Fe(3+). Asp318 provides a ligand contact to Zn(2+). N-formimidoyl-L-glutamate is bound by residues Asn320 and Gly322. Thr323 lines the 4-imidazolone-5-propanoate pocket.

The protein belongs to the metallo-dependent hydrolases superfamily. HutI family. The cofactor is Zn(2+). It depends on Fe(3+) as a cofactor.

It localises to the cytoplasm. It carries out the reaction 4-imidazolone-5-propanoate + H2O = N-formimidoyl-L-glutamate. The protein operates within amino-acid degradation; L-histidine degradation into L-glutamate; N-formimidoyl-L-glutamate from L-histidine: step 3/3. Functionally, catalyzes the hydrolytic cleavage of the carbon-nitrogen bond in imidazolone-5-propanoate to yield N-formimidoyl-L-glutamate. It is the third step in the universal histidine degradation pathway. The chain is Imidazolonepropionase from Serratia proteamaculans (strain 568).